A 126-amino-acid chain; its full sequence is Plastocyanin (126 aa).

A signal peptide spans 1–28 (MSKKFLTILAGLLLVVSSFFLSVSPAAA). A Plastocyanin-like domain is found at 29–126 (ANATVKMGSD…AGMVGKVVVE (98 aa)). Positions 67, 111, 114, and 119 each coordinate Cu cation.

It belongs to the plastocyanin family. Requires Cu(2+) as cofactor.

Its subcellular location is the cellular thylakoid membrane. Participates in electron transfer between P700 and the cytochrome b6-f complex in photosystem I. The polypeptide is Plastocyanin (petE) (Synechocystis sp. (strain ATCC 27184 / PCC 6803 / Kazusa)).